Reading from the N-terminus, the 876-residue chain is Translation initiation factor IF-2 (876 aa).

One can recognise a tr-type G domain in the interval 378–547 (TRPPIITIMG…LTQSEMLELK (170 aa)). Residues 387–394 (GHVDHGKT) are G1. A GTP-binding site is contributed by 387–394 (GHVDHGKT). The tract at residues 412 to 416 (RITQH) is G2. Positions 433–436 (DTPG) are G3. GTP is bound by residues 433–437 (DTPGH) and 487–490 (NKID). Residues 487-490 (NKID) are G4. The tract at residues 523 to 525 (SAK) is G5.

This sequence belongs to the TRAFAC class translation factor GTPase superfamily. Classic translation factor GTPase family. IF-2 subfamily.

It localises to the cytoplasm. Functionally, one of the essential components for the initiation of protein synthesis. Protects formylmethionyl-tRNA from spontaneous hydrolysis and promotes its binding to the 30S ribosomal subunits. Also involved in the hydrolysis of GTP during the formation of the 70S ribosomal complex. The sequence is that of Translation initiation factor IF-2 from Buchnera aphidicola subsp. Baizongia pistaciae (strain Bp).